We begin with the raw amino-acid sequence, 355 residues long: Phospho-N-acetylmuramoyl-pentapeptide-transferase (355 aa).

10 helical membrane-spanning segments follow: residues 3 to 23 (GVLI…PWVI), 56 to 76 (VIIV…GIGF), 80 to 100 (GLLV…DDYI), 120 to 140 (AAVA…AGLL), 152 to 172 (TSLT…IAAT), 185 to 205 (LAAG…FWQF), 224 to 244 (PLDV…FLWW), 251 to 271 (IFMG…IAIV), 276 to 296 (LLLV…MIQV), and 330 to 350 (FWIV…AEFL).

This sequence belongs to the glycosyltransferase 4 family. MraY subfamily. Requires Mg(2+) as cofactor.

The protein localises to the cell membrane. It carries out the reaction UDP-N-acetyl-alpha-D-muramoyl-L-alanyl-gamma-D-glutamyl-meso-2,6-diaminopimeloyl-D-alanyl-D-alanine + di-trans,octa-cis-undecaprenyl phosphate = di-trans,octa-cis-undecaprenyl diphospho-N-acetyl-alpha-D-muramoyl-L-alanyl-D-glutamyl-meso-2,6-diaminopimeloyl-D-alanyl-D-alanine + UMP. The protein operates within cell wall biogenesis; peptidoglycan biosynthesis. Catalyzes the initial step of the lipid cycle reactions in the biosynthesis of the cell wall peptidoglycan: transfers peptidoglycan precursor phospho-MurNAc-pentapeptide from UDP-MurNAc-pentapeptide onto the lipid carrier undecaprenyl phosphate, yielding undecaprenyl-pyrophosphoryl-MurNAc-pentapeptide, known as lipid I. This Frankia alni (strain DSM 45986 / CECT 9034 / ACN14a) protein is Phospho-N-acetylmuramoyl-pentapeptide-transferase.